The following is a 254-amino-acid chain: MFVDLNSDLGESFGSWKMGNDDQILPVVTSANIACGFHAGDPLGILKTVRKAVELGVTIGAHVSYPDLVGFGRRNMDLSRDELIADVLYQISALDGLAKVAGSKVQYVKPHGALYNTIAHDQAQAAAVIDAIKMYNPELVLVALAGSNLVEQARVAGLKVVSEAFADRAYNSDGSLVSRRLEGAVLHDSAFVASRVVSMLKNGGVESIDGVFTPIQADTICLHGDTDGALEMSAAIKAELVKNNIEIRPFVNKA.

Belongs to the LamB/PxpA family. Forms a complex composed of PxpA, PxpB and PxpC.

The catalysed reaction is 5-oxo-L-proline + ATP + 2 H2O = L-glutamate + ADP + phosphate + H(+). In terms of biological role, catalyzes the cleavage of 5-oxoproline to form L-glutamate coupled to the hydrolysis of ATP to ADP and inorganic phosphate. In Acinetobacter baumannii (strain ATCC 17978 / DSM 105126 / CIP 53.77 / LMG 1025 / NCDC KC755 / 5377), this protein is 5-oxoprolinase subunit A.